A 437-amino-acid chain; its full sequence is Endoplasmic reticulum protein SC65 (437 aa).

Residues 1 to 18 (MARVAWGLLWLLLGSAGA) form the signal peptide. Asn361 carries N-linked (GlcNAc...) asparagine glycosylation. 2 stretches are compositionally biased toward acidic residues: residues 381 to 413 (DEME…EEGM) and 428 to 437 (AEAEPEPELA). The interval 381 to 437 (DEMELEETEPPLEPEDALSDAEFEGEGDYEEGMYADWWQEPDAKGDEAEAEPEPELA) is disordered.

This sequence belongs to the leprecan family. Interacts with PLOD1, P3H3 and PPIB. Identified in a complex with PLOD1 and P3H3. Detected in fibroblasts (at protein level). Detected in spleen, prostate, testis, ovary, colon, pancreas, kidney, placenta and heart.

Its subcellular location is the endoplasmic reticulum. Functionally, part of a complex composed of PLOD1, P3H3 and P3H4 that catalyzes hydroxylation of lysine residues in collagen alpha chains and is required for normal assembly and cross-linking of collagen fibrils. Required for normal bone density and normal skin stability via its role in hydroxylation of lysine residues in collagen alpha chains and in collagen fibril assembly. This chain is Endoplasmic reticulum protein SC65, found in Homo sapiens (Human).